We begin with the raw amino-acid sequence, 614 residues long: Probable glycerol-3-phosphate dehydrogenase (614 aa).

Residue 57 to 85 coordinates FAD; the sequence is DLVVVGGGSTGAGCALDGATRGLKVALVD. The interval 595–614 is disordered; it reads MECPEEKRHRGERRLPPQEK. Residues 598 to 614 show a composition bias toward basic and acidic residues; the sequence is PEEKRHRGERRLPPQEK.

The protein belongs to the FAD-dependent glycerol-3-phosphate dehydrogenase family. The cofactor is FAD.

The protein resides in the cytoplasm. It carries out the reaction a quinone + sn-glycerol 3-phosphate = dihydroxyacetone phosphate + a quinol. The protein operates within polyol metabolism; glycerol degradation via glycerol kinase pathway; glycerone phosphate from sn-glycerol 3-phosphate (anaerobic route): step 1/1. The polypeptide is Probable glycerol-3-phosphate dehydrogenase (Encephalitozoon cuniculi (strain GB-M1) (Microsporidian parasite)).